The sequence spans 302 residues: Quinolinate synthase (302 aa).

Iminosuccinate is bound by residues His24 and Ser41. Cys86 contacts [4Fe-4S] cluster. Residues 112–114 (YVN) and Ser129 contribute to the iminosuccinate site. Residue Cys173 participates in [4Fe-4S] cluster binding. Iminosuccinate is bound by residues 199–201 (HPE) and Thr216. Cys259 serves as a coordination point for [4Fe-4S] cluster.

It belongs to the quinolinate synthase family. Type 2 subfamily. [4Fe-4S] cluster serves as cofactor.

The protein localises to the cytoplasm. The catalysed reaction is iminosuccinate + dihydroxyacetone phosphate = quinolinate + phosphate + 2 H2O + H(+). It functions in the pathway cofactor biosynthesis; NAD(+) biosynthesis; quinolinate from iminoaspartate: step 1/1. Its function is as follows. Catalyzes the condensation of iminoaspartate with dihydroxyacetone phosphate to form quinolinate. The sequence is that of Quinolinate synthase from Thermococcus kodakarensis (strain ATCC BAA-918 / JCM 12380 / KOD1) (Pyrococcus kodakaraensis (strain KOD1)).